Reading from the N-terminus, the 298-residue chain is IHLHWYEYPPMNPMMYPLLLIFMLFTGILCLAGNFVTIWVFMNTKSLRTPANLLVVNLAMSDFLMMFTMFPPMMVTCYYHTWTLGPTFCQVYAFLGNLCGCASIWTMVFITFDRYNVIVKGVAGEPLSTKKASLWILTIWVLSTTWCMAPFFGWNHYVPEGNLTGCGTDYLSEDILSRSYLYVYSTWVYFLPLAITIYCYVFIIKAVAAHEKGMRDQAKKMGIKSLRNEEAQKTSAECRLAKIAMTTVALWFIAWTPYLLINWVGMFARSYLSPVYTIWGYVFAKANAVYNPIVYAIS.

The Extracellular segment spans residues 1-15 (IHLHWYEYPPMNPMM). A helical transmembrane segment spans residues 16-40 (YPLLLIFMLFTGILCLAGNFVTIWV). At 41–52 (FMNTKSLRTPAN) the chain is on the cytoplasmic side. Residues 53 to 75 (LLVVNLAMSDFLMMFTMFPPMMV) form a helical membrane-spanning segment. Over 76-89 (TCYYHTWTLGPTFC) the chain is Extracellular. Cys89 and Cys166 are joined by a disulfide. The chain crosses the membrane as a helical span at residues 90 to 112 (QVYAFLGNLCGCASIWTMVFITF). Residues 113–115 (DRY) carry the 'Ionic lock' involved in activated form stabilization motif. At 113–131 (DRYNVIVKGVAGEPLSTKK) the chain is on the cytoplasmic side. Residues 132–152 (ASLWILTIWVLSTTWCMAPFF) form a helical membrane-spanning segment. Residues 153 to 179 (GWNHYVPEGNLTGCGTDYLSEDILSRS) lie on the Extracellular side of the membrane. Residue Asn162 is glycosylated (N-linked (GlcNAc...) asparagine). The chain crosses the membrane as a helical span at residues 180–201 (YLYVYSTWVYFLPLAITIYCYV). At 202–242 (FIIKAVAAHEKGMRDQAKKMGIKSLRNEEAQKTSAECRLAK) the chain is on the cytoplasmic side. Residues 243-264 (IAMTTVALWFIAWTPYLLINWV) form a helical membrane-spanning segment. At 265–275 (GMFARSYLSPV) the chain is on the extracellular side. Residues 276–297 (YTIWGYVFAKANAVYNPIVYAI) form a helical membrane-spanning segment. At Lys285 the chain carries N6-(retinylidene)lysine.

It belongs to the G-protein coupled receptor 1 family. Opsin subfamily. As to quaternary structure, homodimer. Interacts with GNAQ. Contains one covalently linked retinal chromophore.

It is found in the cell projection. The protein resides in the rhabdomere membrane. Its function is as follows. Photoreceptor required for image-forming vision at low light intensity. Can use both retinal and 3-dehydroretinal as visual pigment. Light-induced isomerization of 11-cis to all-trans retinal triggers a conformational change that activates signaling via G-proteins. Signaling via GNAQ probably mediates the activation of phospholipase C. The protein is Rhodopsin (RHO) of Procambarus orcinus (Crayfish).